The primary structure comprises 158 residues: Large ribosomal subunit protein uL15 (158 aa).

Disordered stretches follow at residues 1 to 53 and 138 to 158; these read MRIH…FEGG and ESAG…SNNE. The segment covering 23-35 has biased composition (gly residues); sequence ISAGQGASGGFGM. The segment covering 145–158 has biased composition (polar residues); that stretch reads QDLSDTSNAPSNNE.

It belongs to the universal ribosomal protein uL15 family. In terms of assembly, part of the 50S ribosomal subunit.

In terms of biological role, binds to the 23S rRNA. The polypeptide is Large ribosomal subunit protein uL15 (Crocosphaera subtropica (strain ATCC 51142 / BH68) (Cyanothece sp. (strain ATCC 51142))).